Reading from the N-terminus, the 785-residue chain is Transcription factor Sp1 (785 aa).

The disordered stretch occupies residues 1 to 93 (MSDQDHSMDE…PSQSGGTGEL (93 aa)). Position 2 is an N-acetylserine (S2). Phosphoserine occurs at positions 2 and 7. The segment at 2–82 (SDQDHSMDEM…SPNENSNNSQ (81 aa)) is repressor domain. A Glycyl lysine isopeptide (Lys-Gly) (interchain with G-Cter in SUMO); alternate cross-link involves residue K16. Residue K16 forms a Glycyl lysine isopeptide (Lys-Gly) (interchain with G-Cter in SUMO2); alternate linkage. Gly residues predominate over residues 20 to 34 (GVGGNNGGNGNGGGA). S59 carries the phosphoserine modification. The span at 72–85 (ESPNENSNNSQGPS) shows a compositional bias: low complexity. Position 101 is a phosphoserine; by ATM (S101). A compositionally biased stretch (polar residues) spans 109-123 (IISSSSGATPTSKEQ). Residues 109–141 (IISSSSGATPTSKEQSGSSTNGSNGSESSKNRT) form a disordered region. A compositionally biased stretch (low complexity) spans 124-136 (SGSSTNGSNGSES). The segment at 146-251 (QYVVAAAPNL…ANNVLSGQTQ (106 aa)) is transactivation domain A (Gln-rich). A transactivation domain B (Gln-rich) region spans residues 261–495 (NGNITLLPVN…PMQGVSLGQT (235 aa)). T278 is subject to Phosphothreonine; by MAPK8. The segment at 329–395 (TTTTTSNMGI…KEGEQNQQTQ (67 aa)) is disordered. Residues 342 to 357 (TTSGSSGTNSQGQTPQ) are compositionally biased toward low complexity. The segment covering 358–379 (RVSGLQGSDALNIQQNQTSGGS) has biased composition (polar residues). Positions 381–395 (QAGQQKEGEQNQQTQ) are enriched in low complexity. T453 carries the phosphothreonine; by MAPK1 and MAPK3 modification. The short motif at 462 to 470 (VSWQTLQLQ) is the 9aaTAD element. S491 carries an O-linked (GlcNAc) serine glycan. The tract at residues 496-610 (SSSNTTLTPI…REACTCPYCK (115 aa)) is transactivation domain C (highly charged). The interval 567 to 598 (LHGAGGDGIHDDTAGGEEGENSPDAQPQAGRR) is disordered. The residue at position 612 (S612) is a Phosphoserine; alternate. O-linked (GlcNAc) serine; alternate glycosylation is present at S612. Residues 619-785 (DPGKKKQHIC…QSINISGNGF (167 aa)) form a VZV IE62-binding region. The segment at 626 to 650 (HICHIQGCGKVYGKTSHLRAHLRWH) adopts a C2H2-type 1 zinc-finger fold. T640 carries the phosphothreonine; alternate modification. A glycan (O-linked (GlcNAc) threonine; alternate) is linked at T640. The O-linked (GlcNAc) serine; alternate glycan is linked to S641. Position 641 is a phosphoserine; by PKC/PRKCZ; alternate (S641). At T651 the chain carries Phosphothreonine; by PKC/PRKCZ. The segment at 656–680 (FMCTWSYCGKRFTRSDELQRHKRTH) adopts a C2H2-type 2 zinc-finger fold. T668 is subject to Phosphothreonine. S670 is modified (phosphoserine; by PKC/PRKCZ). At T681 the chain carries Phosphothreonine; by PKC/PRKCZ. The C2H2-type 3 zinc-finger motif lies at 686–708 (FACPECPKRFMRSDHLSKHIKTH). 2 positions are modified to phosphoserine; alternate: S698 and S702. S698 and S702 each carry an O-linked (GlcNAc) serine; alternate glycan. K703 is subject to N6-acetyllysine. Residues 708-785 (HQNKKGGPGV…QSINISGNGF (78 aa)) are domain D. A Phosphothreonine; by MAPK1, MAPK3 and MAPK8 modification is found at T739.

This sequence belongs to the Sp1 C2H2-type zinc-finger protein family. In terms of assembly, interacts with ATF7IP, ATF7IP2, BAHD1, POGZ, HCFC1, AATF and PHC2. Interacts with HLTF; the interaction may be required for basal transcriptional activity of HLTF. Interacts (deacetylated form) with EP300; the interaction enhances gene expression. Interacts with HDAC1 and JUN. Interacts with ELF1; the interaction is inhibited by glycosylation of SP1. Interaction with NFYA; the interaction is inhibited by glycosylation of SP1. Interacts with ATF7IP and TBP. Interacts with MEIS2 isoform 4 and PBX1 isoform PBX1a. Interacts with EGR1. Interacts with SMARCA4/BRG1. Interacts with RNF112 in an oxidative stress-regulated manner. Interacts with ZBTB7A; ZBTB7A prevents the binding to GC-rich motifs in promoters and represses the transcriptional activity of SP1. Interacts with DDX3X; this interaction potentiates SP1-induced CDKN1A/WAF1/CIP1 transcription. Interacts with MSX1; the interaction may inhibit MSX1 autoinactivation. As to quaternary structure, (Microbial infection) Interacts with varicella-zoster virus IE62 protein. (Microbial infection) Interacts with SV40 VP2/3 proteins. Interacts with SV40 major capsid protein VP1; this interaction leads to a cooperativity between the 2 proteins in DNA binding. In terms of assembly, (Microbial infection) Interacts with HIV-1 Vpr; the interaction is inhibited by SP1 O-glycosylation. In terms of processing, phosphorylated on multiple serine and threonine residues. Phosphorylation is coupled to ubiquitination, sumoylation and proteolytic processing. Phosphorylation on Ser-59 enhances proteolytic cleavage. Phosphorylation on Ser-7 enhances ubiquitination and protein degradation. Hyperphosphorylation on Ser-101 in response to DNA damage has no effect on transcriptional activity. MAPK1/MAPK3-mediated phosphorylation on Thr-453 and Thr-739 enhances VEGF transcription but, represses FGF2-triggered PDGFR-alpha transcription. Also implicated in the repression of RECK by ERBB2. Hyperphosphorylated on Thr-278 and Thr-739 during mitosis by MAPK8 shielding SP1 from degradation by the ubiquitin-dependent pathway. Phosphorylated in the zinc-finger domain by calmodulin-activated PKCzeta. Phosphorylation on Ser-641 by PKCzeta is critical for TSA-activated LHR gene expression through release of its repressor, p107. Phosphorylation on Thr-668, Ser-670 and Thr-681 is stimulated by angiotensin II via the AT1 receptor inducing increased binding to the PDGF-D promoter. This phosphorylation is increased in injured artey wall. Ser-59 and Thr-681 can both be dephosphorylated by PP2A during cell-cycle interphase. Dephosphorylation on Ser-59 leads to increased chromatin association during interphase and increases the transcriptional activity. On insulin stimulation, sequentially glycosylated and phosphorylated on several C-terminal serine and threonine residues. Acetylated. Acetylation/deacetylation events affect transcriptional activity. Deacetylation leads to an increase in the expression of the 12(s)-lipooxygenase gene through recruitment of p300 to the promoter. Deacetylated by HDAC6 which leads to increased expression of ENG and positive regulation of angiogenesis. Post-translationally, ubiquitinated. Ubiquitination occurs on the C-terminal proteolytically-cleaved peptide and is triggered by phosphorylation. In terms of processing, sumoylated with SUMO1. Sumoylation modulates proteolytic cleavage of the N-terminal repressor domain. Sumoylation levels are attenuated during tumorigenesis. Phosphorylation mediates SP1 desumoylation. Proteolytic cleavage in the N-terminal repressor domain is prevented by sumoylation. The C-terminal cleaved product is susceptible to degradation. Post-translationally, O-glycosylated; Contains 8 N-acetylglucosamine side chains. Levels are controlled by insulin and the SP1 phosphorylation states. Insulin-mediated O-glycosylation locates SP1 to the nucleus, where it is sequentially deglycosylated and phosphorylated. O-glycosylation affects transcriptional activity through disrupting the interaction with a number of transcription factors including ELF1 and NFYA. Also inhibits interaction with the HIV1 promoter. Inhibited by peroxisomome proliferator receptor gamma (PPARgamma). As to expression, up-regulated in adenocarcinomas of the stomach (at protein level). Isoform 3 is ubiquitously expressed at low levels.

It is found in the nucleus. Its subcellular location is the cytoplasm. In terms of biological role, transcription factor that can activate or repress transcription in response to physiological and pathological stimuli. Binds with high affinity to GC-rich motifs and regulates the expression of a large number of genes involved in a variety of processes such as cell growth, apoptosis, differentiation and immune responses. Highly regulated by post-translational modifications (phosphorylations, sumoylation, proteolytic cleavage, glycosylation and acetylation). Also binds the PDGFR-alpha G-box promoter. May have a role in modulating the cellular response to DNA damage. Implicated in chromatin remodeling. Plays an essential role in the regulation of FE65 gene expression. In complex with ATF7IP, maintains telomerase activity in cancer cells by inducing TERT and TERC gene expression. Isoform 3 is a stronger activator of transcription than isoform 1. Positively regulates the transcription of the core clock component BMAL1. Plays a role in the recruitment of SMARCA4/BRG1 on the c-FOS promoter. Plays a role in protecting cells against oxidative stress following brain injury by regulating the expression of RNF112. The polypeptide is Transcription factor Sp1 (SP1) (Homo sapiens (Human)).